The sequence spans 200 residues: Dephospho-CoA kinase (200 aa).

Residues 4–200 (VIGLTGGIAS…AILKKWNIID (197 aa)) enclose the DPCK domain. 12-17 (ASGKST) is a binding site for ATP.

This sequence belongs to the CoaE family.

The protein localises to the cytoplasm. It catalyses the reaction 3'-dephospho-CoA + ATP = ADP + CoA + H(+). The protein operates within cofactor biosynthesis; coenzyme A biosynthesis; CoA from (R)-pantothenate: step 5/5. Its function is as follows. Catalyzes the phosphorylation of the 3'-hydroxyl group of dephosphocoenzyme A to form coenzyme A. The sequence is that of Dephospho-CoA kinase from Bacillus thuringiensis subsp. konkukian (strain 97-27).